The following is an 82-amino-acid chain: Delta-actitoxin-Aeq2b 2 (82 aa).

A signal peptide spans 1 to 19 (MNRLMILVFAAVFLALASA). A propeptide spanning residues 20–26 (DEDVDIA) is cleaved from the precursor. 3 cysteine pairs are disulfide-bonded: C32–C79, C34–C69, and C62–C80.

This sequence belongs to the sea anemone sodium channel inhibitory toxin family. Type I subfamily.

It localises to the secreted. It is found in the nematocyst. Functionally, binds specifically to voltage-gated sodium channels (Nav), thereby delaying their inactivation during signal transduction. Causes death to crabs. This is Delta-actitoxin-Aeq2b 2 from Actinia equina (Beadlet anemone).